We begin with the raw amino-acid sequence, 658 residues long: uncharacterized protein (658 aa).

Positions 516 to 639 (SSNNSNSSNN…NNNNNSSQGG (124 aa)) are enriched in low complexity. Residues 516–646 (SSNNSNSSNN…QGGNSQGGSG (131 aa)) form a disordered region.

It is found in the cytoplasm. This is an uncharacterized protein from Schizosaccharomyces pombe (strain 972 / ATCC 24843) (Fission yeast).